The sequence spans 290 residues: Protoheme IX farnesyltransferase (290 aa).

9 helical membrane passes run 8 to 28 (LTKP…YFLA), 36 to 56 (LSLL…GCVV), 81 to 101 (INIE…TGLL), 108 to 128 (LSAV…TMWY), 133 to 153 (VYGT…GYLA), 163 to 183 (VLLF…IAMF), 209 to 229 (IMIY…FGHT), 230 to 247 (GYEY…WFKV), and 270 to 290 (LAIT…SITF).

It belongs to the UbiA prenyltransferase family. Protoheme IX farnesyltransferase subfamily.

The protein localises to the cell inner membrane. It catalyses the reaction heme b + (2E,6E)-farnesyl diphosphate + H2O = Fe(II)-heme o + diphosphate. The protein operates within porphyrin-containing compound metabolism; heme O biosynthesis; heme O from protoheme: step 1/1. Converts heme B (protoheme IX) to heme O by substitution of the vinyl group on carbon 2 of heme B porphyrin ring with a hydroxyethyl farnesyl side group. The sequence is that of Protoheme IX farnesyltransferase from Aliivibrio salmonicida (strain LFI1238) (Vibrio salmonicida (strain LFI1238)).